Consider the following 97-residue polypeptide: Large ribosomal subunit protein bL28 (97 aa).

The protein belongs to the bacterial ribosomal protein bL28 family.

The protein is Large ribosomal subunit protein bL28 of Rickettsia rickettsii (strain Iowa).